The following is a 259-amino-acid chain: Gasdermin bGSDM (259 aa).

A lipid anchor (S-palmitoyl cysteine) is attached at Cys3. The next 4 beta stranded transmembrane spans lie at 70-86, 98-116, 162-179, and 187-203; these read FQFR…AASV, SGSF…IQLS, GIRI…DLSA, and AKAK…SYAF. The segment at 244–259 is C-terminal region; sequence PFAFIGDDAFVDLPES.

It belongs to the bacterial gasdermin family. As to quaternary structure, monomer in solution. In terms of assembly, forms large, homooligomeric ring-shaped pores when inserted in membranes. Palmitoylation helps stabilize the inactive state; may self palmitoylate. Palmitoylation plays a significant role in pore formation.

Its subcellular location is the cytoplasm. The protein resides in the cell inner membrane. Its activity is regulated as follows. The full-length protein before cleavage is inactive: intramolecular interactions between the N-terminal domain and the C-terminal region as well as the lipid modification, mediate autoinhibition. The pyroptosis-like-inducing activity is carried by the released N-terminal domain (Gasdermin bGSDM, N-terminus). Precursor of a pore-forming protein involved in defense against bacteriophages. Expression of bGSDM and the neighboring protease gene (Ga0098714_109514) is toxic in E.coli on solid medium. Cleavage of this precursor by its dedicated protease releases the active moiety (gasdermin bGSDM, N-terminus) which inserts into membranes, forming pores and triggering cell death. Functionally, pore-forming protein that causes membrane permeabilization via a pyroptosis-like activity. Makes ring-like pores when released. This Bradyrhizobium tropiciagri protein is Gasdermin bGSDM.